A 777-amino-acid chain; its full sequence is Glucocorticoid receptor (777 aa).

Residues 1 to 14 are compositionally biased toward basic and acidic residues; that stretch reads MDSKESLTPGKEEN. The disordered stretch occupies residues 1 to 22; sequence MDSKESLTPGKEENPSSVLTQE. Positions 1 to 420 are modulating; sequence MDSKESLTPG…TATTGPPPKL (420 aa). Threonine 8 is modified (phosphothreonine). Position 23 is an omega-N-methylarginine (arginine 23). Phosphoserine occurs at positions 45, 113, 134, and 141. Residues 130-182 form a disordered region; it reads NRSTSVPENPKSSASSSVSAAPKEKEFPKTHSDVSSEQQNLKGQTGSNGGNVK. Low complexity predominate over residues 134–150; that stretch reads SVPENPKSSASSSVSAA. Positions 151–163 are enriched in basic and acidic residues; sequence PKEKEFPKTHSDV. A compositionally biased stretch (polar residues) spans 164–174; the sequence is SSEQQNLKGQT. 3 positions are modified to phosphoserine: serine 203, serine 211, and serine 226. Lysine 258 is covalently cross-linked (Glycyl lysine isopeptide (Lys-Gly) (interchain with G-Cter in SUMO2)). Phosphoserine is present on serine 267. Residues lysine 277 and lysine 293 each participate in a glycyl lysine isopeptide (Lys-Gly) (interchain with G-Cter in SUMO); alternate cross-link. Residues lysine 277 and lysine 293 each participate in a glycyl lysine isopeptide (Lys-Gly) (interchain with G-Cter in SUMO2); alternate cross-link. Over residues 394–414 the composition is skewed to low complexity; it reads SSPSMRPDVSSPPSSSSTATT. A disordered region spans residues 394 to 415; that stretch reads SSPSMRPDVSSPPSSSSTATTG. A Phosphoserine modification is found at serine 404. Lysine 419 participates in a covalent cross-link: Glycyl lysine isopeptide (Lys-Gly) (interchain with G-Cter in ubiquitin). 2 consecutive NR C4-type zinc fingers follow at residues 421 to 441 and 457 to 481; these read CLVC…CGSC and CAGR…YRKC. A DNA-binding region (nuclear receptor) is located at residues 421–486; sequence CLVCSDEASG…RYRKCLQAGM (66 aa). N6-acetyllysine is present on residues lysine 480, lysine 492, lysine 494, and lysine 495. The segment at 485–777 is interaction with CLOCK; it reads GMNLEARKTK…NIKKLLFHQK (293 aa). The hinge stretch occupies residues 487 to 523; it reads NLEARKTKKKIKGIQQATTGVSQETSENPANKTIVPA. One can recognise an NR LBD domain in the interval 524–758; that stretch reads TLPQLTPTLV…FPEMLAEIIT (235 aa). The segment at 532-697 is interaction with CRY1; sequence LVSLLEVIEP…EIRMTYIKEL (166 aa). Lysine 703 is covalently cross-linked (Glycyl lysine isopeptide (Lys-Gly) (interchain with G-Cter in SUMO)).

The protein belongs to the nuclear hormone receptor family. NR3 subfamily. In terms of assembly, heteromultimeric cytoplasmic complex with HSP90AA1, HSPA1A/HSPA1B, and FKBP5 or another immunophilin such as PPID, STIP1, or the immunophilin homolog PPP5C. Upon ligand binding FKBP5 dissociates from the complex and FKBP4 takes its place, thereby linking the complex to dynein and mediating transport to the nucleus, where the complex dissociates. Probably forms a complex composed of chaperones HSP90 and HSP70, co-chaperones CDC37, PPP5C, TSC1 and client protein TSC2, CDK4, AKT, RAF1 and NR3C1; this complex does not contain co-chaperones STIP1/HOP and PTGES3/p23. Directly interacts with UNC45A. Binds to DNA as a homodimer, and as heterodimer with NR3C2 or the retinoid X receptor. Binds STAT5A and STAT5B homodimers and heterodimers. Interacts with NRIP1, POU2F1, POU2F2 and TRIM28. Interacts with several coactivator complexes, including the SMARCA4 complex, CREBBP/EP300, TADA2L (Ada complex) and p160 coactivators such as NCOA2 and NCOA6. Interaction with BAG1 inhibits transactivation. Interacts with HEXIM1 and TGFB1I1. Interacts with NCOA1. Interacts with NCOA3, SMARCA4, SMARCC1, SMARCD1, and SMARCE1. Interacts with CLOCK, CRY1 and CRY2 in a ligand-dependent fashion. Interacts with CIART. Interacts with RWDD3. Interacts with UBE2I/UBC9 and this interaction is enhanced in the presence of RWDD3. Interacts with GRIP1. Interacts with NR4A3 (via nuclear receptor DNA-binding domain), represses transcription activity of NR4A3 on the POMC promoter Nur response element (NurRE). Directly interacts with PNRC2 to attract and form a complex with UPF1 and DCP1A; the interaction leads to rapid mRNA degradation. Interacts with GSK3B. Interacts with FNIP1 and FNIP2. Interacts (via C-terminus) with HNRNPU (via C-terminus). Interacts with MCM3AP. Interacts (via domain NR LBD) with HSP90AA1 and HSP90AB1. In the absence of hormonal ligand, interacts with TACC1. Interacts (via NR LBD domain) with ZNF764 (via KRAB domain); the interaction regulates transcription factor activity of NR3C1 by directing its actions toward certain biologic pathways. Post-translationally, acetylation by CLOCK reduces its binding to glucocorticoid response elements and its transcriptional activity. Increased proteasome-mediated degradation in response to glucocorticoids. In terms of processing, phosphorylated in the absence of hormone; becomes hyperphosphorylated in the presence of glucocorticoid. The Ser-203, Ser-226 and Ser-404-phosphorylated forms are mainly cytoplasmic, and the Ser-211-phosphorylated form is nuclear. Phosphorylation at Ser-211 increases transcriptional activity. Phosphorylation at Ser-203, Ser-226 and Ser-404 decreases signaling capacity. Phosphorylation at Ser-404 may protect from glucocorticoid-induced apoptosis. Phosphorylation at Ser-203 and Ser-211 is not required in regulation of chromosome segregation. May be dephosphorylated by PPP5C, attenuates NR3C1 action. Post-translationally, ubiquitinated by UBR5, leading to its degradation: UBR5 specifically recognizes and binds ligand-bound NR3C1 when it is not associated with coactivators (NCOAs). In presence of NCOAs, the UBR5-degron is not accessible, preventing its ubiquitination and degradation. Sumoylation at Lys-277 and Lys-293 negatively regulates its transcriptional activity. Sumoylation at Lys-703 positively regulates its transcriptional activity in the presence of RWDD3. Sumoylation at Lys-277 and Lys-293 is dispensable whereas sumoylation at Lys-703 is critical for the stimulatory effect of RWDD3 on its transcriptional activity. Heat shock increases sumoylation in a RWDD3-dependent manner.

The protein localises to the cytoplasm. It is found in the nucleus. Its subcellular location is the mitochondrion. The protein resides in the cytoskeleton. It localises to the spindle. The protein localises to the microtubule organizing center. It is found in the centrosome. Its subcellular location is the chromosome. The protein resides in the nucleoplasm. Functionally, receptor for glucocorticoids (GC). Has a dual mode of action: as a transcription factor that binds to glucocorticoid response elements (GRE), both for nuclear and mitochondrial DNA, and as a modulator of other transcription factors. Affects inflammatory responses, cellular proliferation and differentiation in target tissues. Involved in chromatin remodeling. Plays a role in rapid mRNA degradation by binding to the 5' UTR of target mRNAs and interacting with PNRC2 in a ligand-dependent manner which recruits the RNA helicase UPF1 and the mRNA-decapping enzyme DCP1A, leading to RNA decay. Could act as a coactivator for STAT5-dependent transcription upon growth hormone (GH) stimulation and could reveal an essential role of hepatic GR in the control of body growth. Mediates glucocorticoid-induced apoptosis. Promotes accurate chromosome segregation during mitosis. May act as a tumor suppressor. May play a negative role in adipogenesis through the regulation of lipolytic and antilipogenic gene expression. In Saimiri boliviensis boliviensis (Bolivian squirrel monkey), this protein is Glucocorticoid receptor (NR3C1).